Consider the following 343-residue polypeptide: Heat-inducible transcription repressor HrcA (343 aa).

This sequence belongs to the HrcA family.

Functionally, negative regulator of class I heat shock genes (grpE-dnaK-dnaJ and groELS operons). Prevents heat-shock induction of these operons. This chain is Heat-inducible transcription repressor HrcA, found in Natranaerobius thermophilus (strain ATCC BAA-1301 / DSM 18059 / JW/NM-WN-LF).